The primary structure comprises 474 residues: MAAQPKDLSHHLSVESASRKQSPLKAVALSKSSRNIKIISLAGGLPNPEYFPIREMDAEIPAINSWKKDSSNSGKLDTVSVPMSSSDSDVLPLSVALQYGQGSGAALLSQFLKEHTRIIHNPPYEGWNIIMTTGNTSCLDIALRMLTNRGDSILVEKYSFPSALQSMRPLGLSCIPIDMDQFGFLPESMDDILTNWDATSYGSPKPHVLYTIPTGQNPTGSTLSVERRKQIYTLAQKHDIIILEDEPYYYLQMDAYEGKPEAADKAFTNEQFVKELIPSFLSMDVDGRVIRMDSLSKVVAPGSRVGWFTAQPLFIERGLRAAETATQSASGISQGILYAMFKHWGQDGYLEWLKHIRYSYTLRRNYLLYAMDTYLPKSVCSYIPPVAGMFIWFEVDKSRYIHADKNESIPEIESKIHAEAVEEGVNLACGNWFVVDPRVNDKIFFRVTFAHAELEEFNVAIERFAGVLKNNFKC.

This sequence belongs to the class-I pyridoxal-phosphate-dependent aminotransferase family. Requires pyridoxal 5'-phosphate as cofactor.

The protein localises to the cytoplasm. The enzyme catalyses an aromatic L-alpha-amino acid + 2-oxoglutarate = an aromatic oxo-acid + L-glutamate. In terms of biological role, has aromatic amino acid transaminase activity. The chain is Aromatic amino acid aminotransferase C56E4.03 from Schizosaccharomyces pombe (strain 972 / ATCC 24843) (Fission yeast).